The sequence spans 205 residues: Probable nicotinate-nucleotide adenylyltransferase (205 aa).

Belongs to the NadD family.

It catalyses the reaction nicotinate beta-D-ribonucleotide + ATP + H(+) = deamido-NAD(+) + diphosphate. It functions in the pathway cofactor biosynthesis; NAD(+) biosynthesis; deamido-NAD(+) from nicotinate D-ribonucleotide: step 1/1. In terms of biological role, catalyzes the reversible adenylation of nicotinate mononucleotide (NaMN) to nicotinic acid adenine dinucleotide (NaAD). This chain is Probable nicotinate-nucleotide adenylyltransferase, found in Nocardioides sp. (strain ATCC BAA-499 / JS614).